A 423-amino-acid chain; its full sequence is Maintenance of mitochondrial morphology protein 1 (423 aa).

Residues 1 to 15 (MWLDDVASELSFTQG) lie on the Lumenal side of the membrane. The chain crosses the membrane as a helical span at residues 16 to 36 (LLLGQLSIVILIGAFIKFFIF). Residues 37–423 (GDPPSPDVSA…PGSMPGLSMA (387 aa)) lie on the Cytoplasmic side of the membrane. The region spanning 110–322 (QPESLDWFNV…EPRFQQIELP (213 aa)) is the SMP-LTD domain. Disordered stretches follow at residues 327 to 370 (RKKN…EAET) and 394 to 423 (SEEG…LSMA). Basic and acidic residues predominate over residues 350 to 367 (RSRDVERDLREEARKEVE).

It belongs to the MMM1 family. As to quaternary structure, homodimer. Component of the ER-mitochondria encounter structure (ERMES) or MDM complex, composed of mmm1, mdm10, mdm12 and mdm34. A mmm1 homodimer associates with one molecule of mdm12 on each side in a pairwise head-to-tail manner, and the SMP-LTD domains of mmm1 and mdm12 generate a continuous hydrophobic tunnel for phospholipid trafficking.

The protein localises to the endoplasmic reticulum membrane. In terms of biological role, component of the ERMES/MDM complex, which serves as a molecular tether to connect the endoplasmic reticulum (ER) and mitochondria. Components of this complex are involved in the control of mitochondrial shape and protein biogenesis, and function in nonvesicular lipid trafficking between the ER and mitochondria. The mdm12-mmm1 subcomplex functions in the major beta-barrel assembly pathway that is responsible for biogenesis of all outer membrane beta-barrel proteins, and acts in a late step after the SAM complex. The mdm10-mdm12-mmm1 subcomplex further acts in the TOM40-specific pathway after the action of the mdm12-mmm1 complex. Essential for establishing and maintaining the structure of mitochondria and maintenance of mtDNA nucleoids. This Sclerotinia sclerotiorum (strain ATCC 18683 / 1980 / Ss-1) (White mold) protein is Maintenance of mitochondrial morphology protein 1.